Consider the following 390-residue polypeptide: Glutamate 5-kinase (390 aa).

ATP is bound at residue Lys-29. Residues Ser-69, Asp-156, and Asn-168 each coordinate substrate. Position 188–189 (188–189 (TD)) interacts with ATP. Residues 295–374 (SGSLIVDAGA…EQFDRILGNN (80 aa)) form the PUA domain.

It belongs to the glutamate 5-kinase family.

The protein localises to the cytoplasm. The catalysed reaction is L-glutamate + ATP = L-glutamyl 5-phosphate + ADP. It functions in the pathway amino-acid biosynthesis; L-proline biosynthesis; L-glutamate 5-semialdehyde from L-glutamate: step 1/2. In terms of biological role, catalyzes the transfer of a phosphate group to glutamate to form L-glutamate 5-phosphate. The polypeptide is Glutamate 5-kinase (Psychrobacter cryohalolentis (strain ATCC BAA-1226 / DSM 17306 / VKM B-2378 / K5)).